A 292-amino-acid chain; its full sequence is NAD kinase (292 aa).

Asp-73 serves as the catalytic Proton acceptor. Residues 73–74 (DG), 147–148 (NE), His-158, Arg-175, Asp-177, 188–193 (TAYSLS), and Gln-247 each bind NAD(+).

It belongs to the NAD kinase family. A divalent metal cation serves as cofactor.

It is found in the cytoplasm. The enzyme catalyses NAD(+) + ATP = ADP + NADP(+) + H(+). Involved in the regulation of the intracellular balance of NAD and NADP, and is a key enzyme in the biosynthesis of NADP. Catalyzes specifically the phosphorylation on 2'-hydroxyl of the adenosine moiety of NAD to yield NADP. The polypeptide is NAD kinase (Escherichia coli (strain UTI89 / UPEC)).